A 273-amino-acid chain; its full sequence is Fos-related antigen 1 (273 aa).

2 disordered regions span residues 1 to 46 (MYRD…IDSS) and 60 to 114 (GPTG…RRER). Over residues 7–35 (EPGPSSGAGSPYGRPAQPPQAQAQTAQQQ) the composition is skewed to low complexity. One can recognise a bZIP domain in the interval 105–168 (EERRRVRRER…ERLELVLEAH (64 aa)). A basic motif region spans residues 107 to 127 (RRRVRRERNKLAAAKCRNRRK). The segment at 133 to 161 (LQAETDKLEDEKSGLQREIEELQKQKERL) is leucine-zipper. The span at 169–182 (RPICKIPEGDKKDP) shows a compositional bias: basic and acidic residues. The interval 169–273 (RPICKIPEGD…PLGSPTLLAL (105 aa)) is disordered. Composition is skewed to low complexity over residues 217 to 235 (LHTP…TPSL) and 254 to 273 (SSSS…LLAL). Residue Ser267 is modified to Phosphoserine.

It belongs to the bZIP family. Fos subfamily. Heterodimer. Interacts with the BAF multiprotein chromatin-remodeling complex subunits SMARCB1 and SMARCD1. Interacts with ARID1A and JUN.

The protein resides in the nucleus. In Mus musculus (Mouse), this protein is Fos-related antigen 1 (Fosl1).